The primary structure comprises 125 residues: Large ribosomal subunit protein eL31 (125 aa).

The protein belongs to the eukaryotic ribosomal protein eL31 family. As to quaternary structure, component of the large ribosomal subunit.

Its subcellular location is the cytoplasm. Functionally, component of the large ribosomal subunit. The ribosome is a large ribonucleoprotein complex responsible for the synthesis of proteins in the cell. The protein is Large ribosomal subunit protein eL31 (rpl31) of Ictalurus punctatus (Channel catfish).